The following is a 245-amino-acid chain: MGQKSNPNGLRLGIIKNWDSKWFANFKKTPQFIHEDFCIRNFINKNYSKALIAQIEIERSKKKDKEIIKINLHVAKSNIINGKDNESLKKITKQIEQITKKEVFFNVIEIKNPDKVAILVAKTMAEQLEQRFYFRRVQKMAIQKVLKTGVKGVKTLISGRLGGLEMARSEGYLEGRVPLNTLRADVEYAFTEAHTTYGSFGVKVWIFHGDVLPGETILDTRKPFAIKSNYISKNNKKSNNYKGDK.

The KH type-2 domain maps to 39–111 (IRNFINKNYS…EVFFNVIEIK (73 aa)).

This sequence belongs to the universal ribosomal protein uS3 family. As to quaternary structure, part of the 30S ribosomal subunit. Forms a tight complex with proteins S10 and S14.

In terms of biological role, binds the lower part of the 30S subunit head. Binds mRNA in the 70S ribosome, positioning it for translation. The chain is Small ribosomal subunit protein uS3 from Phytoplasma mali (strain AT).